Here is a 157-residue protein sequence, read N- to C-terminus: Acetyltransferase PseH (157 aa).

Residues 5 to 152 form the N-acetyltransferase domain; it reads KNFTELNSQE…YHICLKQSDC (148 aa).

Catalyzes the third step in the biosynthesis of pseudaminic acid, a sialic-acid-like sugar that is used to modify flagellin. Mediates N-4 acetylation of UDP-4-amino-4,6-dideoxy-beta-L-AltNAc to form UDP-2,4-diacetamido-2,4,6-trideoxy-beta-L-altropyranose. This is Acetyltransferase PseH (pseH) from Campylobacter jejuni subsp. jejuni serotype O:23/36 (strain 81-176).